An 88-amino-acid polypeptide reads, in one-letter code: Small ribosomal subunit protein uS15 (88 aa).

Belongs to the universal ribosomal protein uS15 family. In terms of assembly, part of the 30S ribosomal subunit. Forms a bridge to the 50S subunit in the 70S ribosome, contacting the 23S rRNA.

In terms of biological role, one of the primary rRNA binding proteins, it binds directly to 16S rRNA where it helps nucleate assembly of the platform of the 30S subunit by binding and bridging several RNA helices of the 16S rRNA. Its function is as follows. Forms an intersubunit bridge (bridge B4) with the 23S rRNA of the 50S subunit in the ribosome. This is Small ribosomal subunit protein uS15 from Geobacter metallireducens (strain ATCC 53774 / DSM 7210 / GS-15).